The primary structure comprises 257 residues: Thiazole synthase (257 aa).

The Schiff-base intermediate with DXP role is filled by K96. 1-deoxy-D-xylulose 5-phosphate contacts are provided by residues G157, 184 to 185, and 206 to 207; these read AG and NT.

The protein belongs to the ThiG family. In terms of assembly, homotetramer. Forms heterodimers with either ThiH or ThiS.

The protein localises to the cytoplasm. It catalyses the reaction [ThiS sulfur-carrier protein]-C-terminal-Gly-aminoethanethioate + 2-iminoacetate + 1-deoxy-D-xylulose 5-phosphate = [ThiS sulfur-carrier protein]-C-terminal Gly-Gly + 2-[(2R,5Z)-2-carboxy-4-methylthiazol-5(2H)-ylidene]ethyl phosphate + 2 H2O + H(+). It functions in the pathway cofactor biosynthesis; thiamine diphosphate biosynthesis. In terms of biological role, catalyzes the rearrangement of 1-deoxy-D-xylulose 5-phosphate (DXP) to produce the thiazole phosphate moiety of thiamine. Sulfur is provided by the thiocarboxylate moiety of the carrier protein ThiS. In vitro, sulfur can be provided by H(2)S. The protein is Thiazole synthase of Bartonella bacilliformis (strain ATCC 35685 / KC583 / Herrer 020/F12,63).